The chain runs to 172 residues: DKKLDADISPKPTIFLPSVAETNLHKTGTYLCVLEKFFPDVIRVYWKEKKGNTILDSQEGDMLKTNDTYMKFSWLTVPERSMGKEHRCIVKHENNKGGADQEIFFPTIKKVAVSTKPTTCWQDKNDVLQLQFTITSAYYTYLLLLLKSVIYLAIISFSLLRRTSVCCNEKKS.

The interval 1 to 140 (DKKLDADISP…QFTITSAYYT (140 aa)) is c region. A helical transmembrane segment spans residues 141 to 160 (YLLLLLKSVIYLAIISFSLL). At 161-172 (RRTSVCCNEKKS) the chain is on the cytoplasmic side.

It localises to the membrane. The sequence is that of T-cell receptor gamma chain C region C7.5 from Mus musculus (Mouse).